A 206-amino-acid chain; its full sequence is dCTP deaminase, dUMP-forming (206 aa).

DCTP contacts are provided by residues Arg117–Arg122, Asp135, Thr143–Glu145, Gln163, Tyr177, Lys184, and Gln188. Residue Glu145 is the Proton donor/acceptor of the active site.

It belongs to the dCTP deaminase family. As to quaternary structure, homotrimer.

The enzyme catalyses dCTP + 2 H2O = dUMP + NH4(+) + diphosphate. Its pathway is pyrimidine metabolism; dUMP biosynthesis; dUMP from dCTP: step 1/1. Bifunctional enzyme that catalyzes both the deamination of dCTP to dUTP and the hydrolysis of dUTP to dUMP without releasing the toxic dUTP intermediate. The polypeptide is dCTP deaminase, dUMP-forming (Methanococcus maripaludis (strain C6 / ATCC BAA-1332)).